A 202-amino-acid chain; its full sequence is MYKRLVQEFFPKLDFENLEKYVNLIEFSNKNFNLTAFSGDILWKEGIFESIFTMNFIVGLVNNKENKKLKILDIGAGSGFPSIPFLITNPEIELTISESMQKRCQFLKDVSEKLDLKFNLICKPVQEINPQKFDIITARAVANLEKLEKITKKIHFPKTLLAFIKGPKVFNEVQNCKNCNYKIIKVNNNINKKIFIAFKQVS.

Residues glycine 75, phenylalanine 80, 125 to 126, and arginine 139 each bind S-adenosyl-L-methionine; that span reads VQ.

The protein belongs to the methyltransferase superfamily. RNA methyltransferase RsmG family.

The protein localises to the cytoplasm. Its function is as follows. Specifically methylates the N7 position of a guanine in 16S rRNA. This Mesomycoplasma hyopneumoniae (strain J / ATCC 25934 / NCTC 10110) (Mycoplasma hyopneumoniae) protein is Ribosomal RNA small subunit methyltransferase G.